Consider the following 311-residue polypeptide: Mediator of RNA polymerase II transcription subunit 27 (311 aa).

The residue at position 132 (S132) is a Phosphoserine. K134 carries the N6-methyllysine modification.

This sequence belongs to the Mediator complex subunit 27 family. As to quaternary structure, component of the Mediator complex, which is composed of MED1, MED4, MED6, MED7, MED8, MED9, MED10, MED11, MED12, MED13, MED13L, MED14, MED15, MED16, MED17, MED18, MED19, MED20, MED21, MED22, MED23, MED24, MED25, MED26, MED27, MED29, MED30, MED31, CCNC, CDK8 and CDC2L6/CDK11. The MED12, MED13, CCNC and CDK8 subunits form a distinct module termed the CDK8 module. Mediator containing the CDK8 module is less active than Mediator lacking this module in supporting transcriptional activation. Individual preparations of the Mediator complex lacking one or more distinct subunits have been variously termed ARC, CRSP, DRIP, PC2, SMCC and TRAP.

The protein resides in the nucleus. Component of the Mediator complex, a coactivator involved in the regulated transcription of nearly all RNA polymerase II-dependent genes. Mediator functions as a bridge to convey information from gene-specific regulatory proteins to the basal RNA polymerase II transcription machinery. Mediator is recruited to promoters by direct interactions with regulatory proteins and serves as a scaffold for the assembly of a functional preinitiation complex with RNA polymerase II and the general transcription factors. The sequence is that of Mediator of RNA polymerase II transcription subunit 27 (MED27) from Bos taurus (Bovine).